The chain runs to 180 residues: Large ribosomal subunit protein bL17 (180 aa).

Residues 134-180 form a disordered region; sequence AQAKAKKAAAMPTEESEAKPAEEGDVVGASEPDAKAPEEPPAEAPEN.

It belongs to the bacterial ribosomal protein bL17 family. As to quaternary structure, part of the 50S ribosomal subunit. Contacts protein L32.

This is Large ribosomal subunit protein bL17 from Mycobacterium tuberculosis (strain ATCC 25177 / H37Ra).